Here is a 469-residue protein sequence, read N- to C-terminus: Spliceosome-associated protein CWC27 homolog (469 aa).

Ser-2 carries the N-acetylserine modification. One can recognise a PPIase cyclophilin-type domain in the interval 11 to 166 (TNGKVLLKTT…NPHRIKSCEV (156 aa)). Basic and acidic residues predominate over residues 175 to 193 (TPREIKKPKNEKPEEEVKK). Disordered stretches follow at residues 175 to 415 (TPRE…DDEG) and 428 to 469 (RKVK…KERR). A coiled-coil region spans residues 206–229 (SFGEEAEEEEEEVNRVSQSMKGRS). Residues 231-241 (SSHDLLKDDPH) show a composition bias toward basic and acidic residues. Residues 256-278 (TGDLEDDGEDDSAERDEYMEDDE) are compositionally biased toward acidic residues. 2 stretches are compositionally biased toward basic and acidic residues: residues 302 to 341 (GDGEKKPASRSEELRKEARQLKRELLAAKQKKETAIKVEE) and 356 to 368 (EYRREKQKYEALR). A coiled-coil region spans residues 309 to 371 (ASRSEELRKE…QKYEALRKQQ (63 aa)). Polar residues predominate over residues 384–403 (ALLSQFKSKLTQAITETPEN). Over residues 454 to 469 (RREESKKLLREKKERR) the composition is skewed to basic and acidic residues.

The protein belongs to the cyclophilin-type PPIase family. Part of the activated spliceosome B/catalytic step 1 spliceosome, one of the forms of the spliceosome which has a well-formed active site but still cannot catalyze the branching reaction and is composed at least of 52 proteins, the U2, U5 and U6 snRNAs and the pre-mRNA. Recruited during early steps of activated spliceosome B maturation, it is probably one of the first proteins released from this complex as he matures to the spliceosome C complex. Component of the minor spliceosome, which splices U12-type introns.

Its subcellular location is the nucleus. As part of the spliceosome, plays a role in pre-mRNA splicing. Probable inactive PPIase with no peptidyl-prolyl cis-trans isomerase activity. As a component of the minor spliceosome, involved in the splicing of U12-type introns in pre-mRNAs. The sequence is that of Spliceosome-associated protein CWC27 homolog from Mus musculus (Mouse).